Consider the following 401-residue polypeptide: Phosphoglycerate kinase (401 aa).

Residues 24–26 (DFN), Arg40, 63–66 (HFGR), Arg122, and Arg155 contribute to the substrate site. ATP-binding positions include Lys206, Gly297, Glu328, and 357-360 (GGDS).

It belongs to the phosphoglycerate kinase family. In terms of assembly, monomer.

It localises to the cytoplasm. The enzyme catalyses (2R)-3-phosphoglycerate + ATP = (2R)-3-phospho-glyceroyl phosphate + ADP. The protein operates within carbohydrate degradation; glycolysis; pyruvate from D-glyceraldehyde 3-phosphate: step 2/5. The chain is Phosphoglycerate kinase from Prochlorococcus marinus (strain NATL2A).